We begin with the raw amino-acid sequence, 334 residues long: Ferredoxin--NADP reductase (334 aa).

FAD-binding residues include aspartate 32, glutamine 40, tyrosine 45, valine 85, phenylalanine 120, aspartate 287, and threonine 327.

The protein belongs to the ferredoxin--NADP reductase type 2 family. In terms of assembly, homodimer. FAD serves as cofactor.

The catalysed reaction is 2 reduced [2Fe-2S]-[ferredoxin] + NADP(+) + H(+) = 2 oxidized [2Fe-2S]-[ferredoxin] + NADPH. The polypeptide is Ferredoxin--NADP reductase (Wolbachia pipientis subsp. Culex pipiens (strain wPip)).